The chain runs to 178 residues: MPAPGVHHPNTASPFLKTVAAGKGQVAAAPEHPAPSARARGSHLRPRRCSCSSWLDKECVYFCHLDIIWVNTPGQTAPYGLGNPPRRRRRSLPKRCECSSGGDPACATFCHRRPWAEAVVVPGSRSPADVFQAGRTWTSAGELLRQLRNISAAKIRFPRRPQEAGRQLRPTHPRRRKR.

The first 24 residues, Met-1–Gly-24, serve as a signal peptide directing secretion. A propeptide spanning residues Gln-25 to Pro-46 is cleaved from the precursor. 2 disulfides stabilise this stretch: Cys-49-Cys-63 and Cys-51-Cys-59. Residues Val-70–Arg-178 constitute a propeptide that is removed on maturation. The segment at Cys-96–His-111 is endothelin-like. The interval Arg-156 to Arg-178 is disordered. A compositionally biased stretch (basic residues) spans Arg-169 to Arg-178.

It belongs to the endothelin/sarafotoxin family.

The protein localises to the secreted. In terms of biological role, endothelins are endothelium-derived vasoconstrictor peptides. This chain is Endothelin-2 (EDN2), found in Canis lupus familiaris (Dog).